A 211-amino-acid polypeptide reads, in one-letter code: MADAFSLQRVLETFRSSLSENKEVYIKYYIAGWQELVSFMNSLGNVFSFISKDVVSKIQILENFLSGENGSNYVTIQSMVKYELENDLVDLTKRGSHPESGCRTLLRLHRALRWLELFLERLRTSTEDSKTSVMCSDAYNESLANHHPWLIRKAVGVAFCALPGRETFFDVMNAGDHTQVVALLGESLPLIAEVYQITEDLYAKNNLLELP.

The an N-acylsphingoid base 1-phosphate site is built by aspartate 53, lysine 57, arginine 103, arginine 107, and histidine 147.

Belongs to the GLTP family.

The protein resides in the cytoplasm. The protein localises to the cytosol. Its subcellular location is the golgi apparatus. It is found in the trans-Golgi network membrane. It localises to the cell membrane. The protein resides in the endosome membrane. The protein localises to the nucleus outer membrane. The catalysed reaction is N-(hexadecanoyl)-sphing-4-enine-1-phosphate(in) = N-(hexadecanoyl)-sphing-4-enine-1-phosphate(out). The enzyme catalyses N-(9Z-octadecenoyl)-sphing-4-enine-1-phosphate(in) = N-(9Z-octadecenoyl)-sphing-4-enine-1-phosphate(out). Functionally, mediates the intracellular transfer of ceramide-1-phosphate (C1P) between organelle membranes and the cell membrane. Required for normal structure of the Golgi stacks. Can bind phosphoceramides with a variety of aliphatic chains, but has a preference for lipids with saturated C16:0 or monounsaturated C18:1 aliphatic chains, and is inefficient with phosphoceramides containing lignoceryl (C24:0). Plays a role in the regulation of the cellular levels of ceramide-1-phosphate, and thereby contributes to the regulation of phospholipase PLA2G4A activity and the release of arachidonic acid. Has no activity with galactosylceramide, lactosylceramide, sphingomyelin, phosphatidylcholine, phosphatidic acid and ceramide. C1P transfer is stimulated by phosphatidylserine in C1P source vesicles. Regulates autophagy and pyroptosis, but not apoptosis. This chain is Ceramide-1-phosphate transfer protein (cptp), found in Danio rerio (Zebrafish).